The following is a 521-amino-acid chain: Glutamyl-tRNA(Gln) amidotransferase subunit A (521 aa).

Residues Lys79 and Ser187 each act as charge relay system in the active site. The active-site Acyl-ester intermediate is the Ser211.

It belongs to the amidase family. GatA subfamily. As to quaternary structure, heterotrimer of A, B and C subunits.

The enzyme catalyses L-glutamyl-tRNA(Gln) + L-glutamine + ATP + H2O = L-glutaminyl-tRNA(Gln) + L-glutamate + ADP + phosphate + H(+). Functionally, allows the formation of correctly charged Gln-tRNA(Gln) through the transamidation of misacylated Glu-tRNA(Gln) in organisms which lack glutaminyl-tRNA synthetase. The reaction takes place in the presence of glutamine and ATP through an activated gamma-phospho-Glu-tRNA(Gln). This chain is Glutamyl-tRNA(Gln) amidotransferase subunit A, found in Mesorhizobium japonicum (strain LMG 29417 / CECT 9101 / MAFF 303099) (Mesorhizobium loti (strain MAFF 303099)).